Consider the following 454-residue polypeptide: tRNA-2-methylthio-N(6)-dimethylallyladenosine synthase (454 aa).

Residues 6-122 enclose the MTTase N-terminal domain; that stretch reads RRYHITTFGC…LKDLLESVFA (117 aa). Residues Cys-15, Cys-51, Cys-85, Cys-157, Cys-161, and Cys-164 each coordinate [4Fe-4S] cluster. The Radical SAM core domain maps to 143 to 380; sequence RDSTVTAWVN…NHLVNVKAAE (238 aa). Residues 383–447 enclose the TRAM domain; it reads QRYMGRIEEV…AFSLTGEPIE (65 aa).

The protein belongs to the methylthiotransferase family. MiaB subfamily. Monomer. Requires [4Fe-4S] cluster as cofactor.

It localises to the cytoplasm. The catalysed reaction is N(6)-dimethylallyladenosine(37) in tRNA + (sulfur carrier)-SH + AH2 + 2 S-adenosyl-L-methionine = 2-methylsulfanyl-N(6)-dimethylallyladenosine(37) in tRNA + (sulfur carrier)-H + 5'-deoxyadenosine + L-methionine + A + S-adenosyl-L-homocysteine + 2 H(+). Catalyzes the methylthiolation of N6-(dimethylallyl)adenosine (i(6)A), leading to the formation of 2-methylthio-N6-(dimethylallyl)adenosine (ms(2)i(6)A) at position 37 in tRNAs that read codons beginning with uridine. In Nostoc sp. (strain PCC 7120 / SAG 25.82 / UTEX 2576), this protein is tRNA-2-methylthio-N(6)-dimethylallyladenosine synthase.